The following is a 551-amino-acid chain: CTP synthase (551 aa).

Positions 1-267 (MSGTKYIFVT…DALVLEKLGL (267 aa)) are amidoligase domain. CTP is bound at residue serine 15. A UTP-binding site is contributed by serine 15. An ATP-binding site is contributed by 16-21 (SIGKGT). Tyrosine 56 contacts L-glutamine. An ATP-binding site is contributed by aspartate 73. Positions 73 and 141 each coordinate Mg(2+). Residues 148 to 150 (DIE), 188 to 193 (KTKPTQ), and lysine 224 each bind CTP. UTP-binding positions include 188–193 (KTKPTQ) and lysine 224. The Glutamine amidotransferase type-1 domain occupies 292-534 (RVAVIGKYIR…VGACLGAAEE (243 aa)). Glycine 355 serves as a coordination point for L-glutamine. Cysteine 382 serves as the catalytic Nucleophile; for glutamine hydrolysis. L-glutamine-binding positions include 383–386 (LGMQ), glutamate 406, and arginine 462. Active-site residues include histidine 507 and glutamate 509.

It belongs to the CTP synthase family. Homotetramer.

The catalysed reaction is UTP + L-glutamine + ATP + H2O = CTP + L-glutamate + ADP + phosphate + 2 H(+). It catalyses the reaction L-glutamine + H2O = L-glutamate + NH4(+). The enzyme catalyses UTP + NH4(+) + ATP = CTP + ADP + phosphate + 2 H(+). The protein operates within pyrimidine metabolism; CTP biosynthesis via de novo pathway; CTP from UDP: step 2/2. Its activity is regulated as follows. Allosterically activated by GTP, when glutamine is the substrate; GTP has no effect on the reaction when ammonia is the substrate. The allosteric effector GTP functions by stabilizing the protein conformation that binds the tetrahedral intermediate(s) formed during glutamine hydrolysis. Inhibited by the product CTP, via allosteric rather than competitive inhibition. Its function is as follows. Catalyzes the ATP-dependent amination of UTP to CTP with either L-glutamine or ammonia as the source of nitrogen. Regulates intracellular CTP levels through interactions with the four ribonucleotide triphosphates. In Rubrobacter xylanophilus (strain DSM 9941 / JCM 11954 / NBRC 16129 / PRD-1), this protein is CTP synthase.